We begin with the raw amino-acid sequence, 214 residues long: tRNA (guanine-N(7)-)-methyltransferase (214 aa).

The S-adenosyl-L-methionine site is built by Glu-43, Glu-68, Asp-95, and Asp-117. The active site involves Asp-117. Substrate is bound by residues Lys-121, Asp-153, and 190–193 (TEYE).

It belongs to the class I-like SAM-binding methyltransferase superfamily. TrmB family.

The catalysed reaction is guanosine(46) in tRNA + S-adenosyl-L-methionine = N(7)-methylguanosine(46) in tRNA + S-adenosyl-L-homocysteine. It functions in the pathway tRNA modification; N(7)-methylguanine-tRNA biosynthesis. Functionally, catalyzes the formation of N(7)-methylguanine at position 46 (m7G46) in tRNA. This is tRNA (guanine-N(7)-)-methyltransferase from Staphylococcus aureus (strain MSSA476).